Consider the following 125-residue polypeptide: Small ribosomal subunit protein uS12 (125 aa).

D89 bears the 3-methylthioaspartic acid mark. The tract at residues 105 to 125 (QGVKDRKQSRSKYGAKKPKAK) is disordered. Residues 113 to 125 (SRSKYGAKKPKAK) are compositionally biased toward basic residues.

The protein belongs to the universal ribosomal protein uS12 family. In terms of assembly, part of the 30S ribosomal subunit. Contacts proteins S8 and S17. May interact with IF1 in the 30S initiation complex.

In terms of biological role, with S4 and S5 plays an important role in translational accuracy. Its function is as follows. Interacts with and stabilizes bases of the 16S rRNA that are involved in tRNA selection in the A site and with the mRNA backbone. Located at the interface of the 30S and 50S subunits, it traverses the body of the 30S subunit contacting proteins on the other side and probably holding the rRNA structure together. The combined cluster of proteins S8, S12 and S17 appears to hold together the shoulder and platform of the 30S subunit. The sequence is that of Small ribosomal subunit protein uS12 from Delftia acidovorans (strain DSM 14801 / SPH-1).